A 93-amino-acid chain; its full sequence is MKAILLLAIFSVLTVAICGVSQNYGNVRYNYTELPNGEYCYIPRRRCVTTEQCCKPYDTVNNFAACGMAWPEDKKRKVNKCYICDNELTLCTR.

The N-terminal stretch at 1–18 is a signal peptide; the sequence is MKAILLLAIFSVLTVAIC. 4 disulfides stabilise this stretch: Cys40/Cys54, Cys40/Cys81, Cys53/Cys66, and Cys84/Cys91.

The protein belongs to the neurotoxin 27 (Jztx-72) family. ICK-72 subfamily. Expressed by the venom gland.

It localises to the secreted. Its function is as follows. Probable neurotoxin with ion channel impairing activity. The protein is U8-theraphotoxin-Hs1b of Cyriopagopus schmidti (Chinese bird spider).